The following is a 420-amino-acid chain: Serine--tRNA ligase (420 aa).

Residue 227-229 (TSE) participates in L-serine binding. Residues 258 to 260 (RRE) and V274 each bind ATP. E281 serves as a coordination point for L-serine. 345-348 (EVTS) is an ATP binding site. T379 contributes to the L-serine binding site.

It belongs to the class-II aminoacyl-tRNA synthetase family. Type-1 seryl-tRNA synthetase subfamily. As to quaternary structure, homodimer. The tRNA molecule binds across the dimer.

The protein localises to the cytoplasm. It carries out the reaction tRNA(Ser) + L-serine + ATP = L-seryl-tRNA(Ser) + AMP + diphosphate + H(+). The catalysed reaction is tRNA(Sec) + L-serine + ATP = L-seryl-tRNA(Sec) + AMP + diphosphate + H(+). Its pathway is aminoacyl-tRNA biosynthesis; selenocysteinyl-tRNA(Sec) biosynthesis; L-seryl-tRNA(Sec) from L-serine and tRNA(Sec): step 1/1. Functionally, catalyzes the attachment of serine to tRNA(Ser). Is also able to aminoacylate tRNA(Sec) with serine, to form the misacylated tRNA L-seryl-tRNA(Sec), which will be further converted into selenocysteinyl-tRNA(Sec). The chain is Serine--tRNA ligase from Acidothermus cellulolyticus (strain ATCC 43068 / DSM 8971 / 11B).